Here is a 388-residue protein sequence, read N- to C-terminus: Processive diacylglycerol beta-glucosyltransferase (388 aa).

Belongs to the glycosyltransferase 28 family. UgtP subfamily.

The protein localises to the cell membrane. It carries out the reaction a 1,2-diacyl-3-O-(beta-D-glucopyranosyl)-sn-glycerol + UDP-alpha-D-glucose = a 1,2-diacyl-3-O-(beta-D-Glc-(1-&gt;6)-beta-D-Glc)-sn-glycerol + UDP + H(+). The catalysed reaction is a 1,2-diacyl-3-O-(beta-D-Glc-(1-&gt;6)-beta-D-Glc)-sn-glycerol + UDP-alpha-D-glucose = a 1,2-diacyl-3-O-(beta-D-Glc-(1-&gt;6)-beta-D-Glc-(1-&gt;6)-beta-D-Glc)-sn-glycerol + UDP + H(+). The enzyme catalyses a 1,2-diacyl-sn-glycerol + UDP-alpha-D-glucose = a 1,2-diacyl-3-O-(beta-D-glucopyranosyl)-sn-glycerol + UDP + H(+). The protein operates within glycolipid metabolism; diglucosyl-diacylglycerol biosynthesis. Processive glucosyltransferase involved in the biosynthesis of both the bilayer- and non-bilayer-forming membrane glucolipids. Is able to successively transfer up to three glucosyl residues to diacylglycerol (DAG), thereby catalyzing the formation of beta-monoglucosyl-DAG (3-O-(beta-D-glucopyranosyl)-1,2-diacyl-sn-glycerol), beta-diglucosyl-DAG (3-O-(beta-D-glucopyranosyl-beta-(1-&gt;6)-D-glucopyranosyl)-1,2-diacyl-sn-glycerol) and beta-triglucosyl-DAG (3-O-(beta-D-glucopyranosyl-beta-(1-&gt;6)-D-glucopyranosyl-beta-(1-&gt;6)-D-glucopyranosyl)-1,2-diacyl-sn-glycerol). Beta-diglucosyl-DAG is the predominant glycolipid found in Bacillales and is also used as a membrane anchor for lipoteichoic acid (LTA). The polypeptide is Processive diacylglycerol beta-glucosyltransferase (Bacillus thuringiensis (strain Al Hakam)).